The following is a 350-amino-acid chain: Ribonuclease H2 subunit B (350 aa).

A compositionally biased stretch (polar residues) spans 134–151 (QDYSNSSDTGENQKSNSK). The interval 134–153 (QDYSNSSDTGENQKSNSKTN) is disordered.

It belongs to the RNase H2 subunit B family. Highly divergent. As to quaternary structure, the RNase 2 complex is a heterotrimer composed of the catalytic subunit RNH201 and of the non-catalytic subunits RNH202 and RNH203.

It localises to the nucleus. Functionally, non catalytic subunit of RNase H2, an endonuclease that specifically degrades the RNA of RNA:DNA hybrids. Participates in DNA replication, possibly by mediating the removal of lagging-strand Okazaki fragment RNA primers during DNA replication. Mediates the excision of single ribonucleotides from DNA:RNA duplexes. This Saccharomyces cerevisiae (strain ATCC 204508 / S288c) (Baker's yeast) protein is Ribonuclease H2 subunit B (RNH202).